The sequence spans 685 residues: DNA ligase (685 aa).

Residues aspartate 47–aspartate 51, serine 96–leucine 97, and glutamate 125 each bind NAD(+). Lysine 127 functions as the N6-AMP-lysine intermediate in the catalytic mechanism. Positions 148, 185, 304, and 328 each coordinate NAD(+). The Zn(2+) site is built by cysteine 422, cysteine 425, cysteine 440, and cysteine 446. The region spanning alanine 605–alanine 685 is the BRCT domain.

It belongs to the NAD-dependent DNA ligase family. LigA subfamily. Mg(2+) serves as cofactor. It depends on Mn(2+) as a cofactor.

The catalysed reaction is NAD(+) + (deoxyribonucleotide)n-3'-hydroxyl + 5'-phospho-(deoxyribonucleotide)m = (deoxyribonucleotide)n+m + AMP + beta-nicotinamide D-nucleotide.. Functionally, DNA ligase that catalyzes the formation of phosphodiester linkages between 5'-phosphoryl and 3'-hydroxyl groups in double-stranded DNA using NAD as a coenzyme and as the energy source for the reaction. It is essential for DNA replication and repair of damaged DNA. The polypeptide is DNA ligase (Shewanella baltica (strain OS223)).